A 710-amino-acid polypeptide reads, in one-letter code: PWWP domain-containing DNA repair factor 3A (710 aa).

A disordered region spans residues 106-160 (QESSAGTGRADRSLRGKPMEHVSSPCDSNSSSLPRGDVLGSSRPHRRRPCVQQSL). The segment covering 114–125 (RADRSLRGKPME) has biased composition (basic and acidic residues). A compositionally biased stretch (low complexity) spans 128–137 (SSPCDSNSSS). Phosphoserine is present on serine 161. Disordered stretches follow at residues 177–204 (KKGLRKSENPRGPLVLPAGGGAQDESGS) and 230–398 (NGSS…EEPP). Positions 288–297 (PSACSEPGEC) are enriched in low complexity. Phosphoserine occurs at positions 374 and 375. Residues 375–385 (SEESMGSNSMR) are compositionally biased toward polar residues. The 62-residue stretch at 411–472 (VGMLVWHKHK…KHFDCKEKQT (62 aa)) folds into the PWWP domain.

Belongs to the PWWP3A family. As to quaternary structure, interacts with TP53BP1 (via BRCT domain); the interaction is not dependent on its phosphorylation status. Binds nucleosomes. Interacts with trimethylated 'Lys-36' of histone H3 (H3K36me3) (in vitro).

The protein localises to the nucleus. Functionally, involved in the DNA damage response pathway by contributing to the maintenance of chromatin architecture. Recruited to the vicinity of DNA breaks by TP53BP1 and plays an accessory role to facilitate damage-induced chromatin changes and promoting chromatin relaxation. Required for efficient DNA repair and cell survival following DNA damage. The protein is PWWP domain-containing DNA repair factor 3A of Homo sapiens (Human).